Here is a 591-residue protein sequence, read N- to C-terminus: L-fucose isomerase (591 aa).

Catalysis depends on proton acceptor residues E337 and D361. Residues E337, D361, and H528 each coordinate Mn(2+).

The protein belongs to the L-fucose isomerase family. As to quaternary structure, homohexamer. It depends on Mn(2+) as a cofactor.

Its subcellular location is the cytoplasm. The catalysed reaction is L-fucose = L-fuculose. The protein operates within carbohydrate degradation; L-fucose degradation; L-lactaldehyde and glycerone phosphate from L-fucose: step 1/3. Functionally, converts the aldose L-fucose into the corresponding ketose L-fuculose. This chain is L-fucose isomerase, found in Shigella dysenteriae serotype 1 (strain Sd197).